We begin with the raw amino-acid sequence, 166 residues long: Small ribosomal subunit protein bS18m (166 aa).

A mitochondrion-targeting transit peptide spans 1–31; it reads MLGRRIFSPAPNRGFILCNLIQSNNSTRRGF. The disordered stretch occupies residues 29–48; sequence RGFSDNRKFNERNSEASSNV. Residues 30–42 show a composition bias toward basic and acidic residues; sequence GFSDNRKFNERNS.

This sequence belongs to the bacterial ribosomal protein bS18 family. In terms of assembly, component of the mitochondrial small ribosomal subunit (mt-SSU). Mature yeast 74S mitochondrial ribosomes consist of a small (37S) and a large (54S) subunit. The 37S small subunit contains a 15S ribosomal RNA (15S mt-rRNA) and at least 32 different proteins. The 54S large subunit contains a 21S rRNA (21S mt-rRNA) and at least 45 different proteins.

It is found in the mitochondrion. Its function is as follows. Component of the mitochondrial ribosome (mitoribosome), a dedicated translation machinery responsible for the synthesis of mitochondrial genome-encoded proteins, including at least some of the essential transmembrane subunits of the mitochondrial respiratory chain. The mitoribosomes are attached to the mitochondrial inner membrane and translation products are cotranslationally integrated into the membrane. The polypeptide is Small ribosomal subunit protein bS18m (rsm18) (Schizosaccharomyces pombe (strain 972 / ATCC 24843) (Fission yeast)).